A 392-amino-acid polypeptide reads, in one-letter code: NAD(P)H-quinone oxidoreductase subunit H (392 aa).

This sequence belongs to the complex I 49 kDa subunit family. In terms of assembly, NDH-1 can be composed of about 15 different subunits; different subcomplexes with different compositions have been identified which probably have different functions.

It localises to the cellular thylakoid membrane. The catalysed reaction is a plastoquinone + NADH + (n+1) H(+)(in) = a plastoquinol + NAD(+) + n H(+)(out). The enzyme catalyses a plastoquinone + NADPH + (n+1) H(+)(in) = a plastoquinol + NADP(+) + n H(+)(out). In terms of biological role, NDH-1 shuttles electrons from an unknown electron donor, via FMN and iron-sulfur (Fe-S) centers, to quinones in the respiratory and/or the photosynthetic chain. The immediate electron acceptor for the enzyme in this species is believed to be plastoquinone. Couples the redox reaction to proton translocation, and thus conserves the redox energy in a proton gradient. Cyanobacterial NDH-1 also plays a role in inorganic carbon-concentration. The chain is NAD(P)H-quinone oxidoreductase subunit H from Synechococcus sp. (strain JA-2-3B'a(2-13)) (Cyanobacteria bacterium Yellowstone B-Prime).